The sequence spans 103 residues: Small ribosomal subunit protein uS10 (103 aa).

It belongs to the universal ribosomal protein uS10 family. As to quaternary structure, part of the 30S ribosomal subunit.

Its function is as follows. Involved in the binding of tRNA to the ribosomes. This is Small ribosomal subunit protein uS10 from Xanthomonas axonopodis pv. citri (strain 306).